Here is a 558-residue protein sequence, read N- to C-terminus: T-complex protein 1 subunit gamma (558 aa).

Cys381 and Cys387 are oxidised to a cystine.

It belongs to the TCP-1 chaperonin family. In terms of assembly, heterooligomeric complex of about 850 to 900 kDa that forms two stacked rings, 12 to 16 nm in diameter.

The protein localises to the cytoplasm. In terms of biological role, molecular chaperone; assists the folding of proteins upon ATP hydrolysis. Known to play a role, in vitro, in the folding of actin and tubulin. The chain is T-complex protein 1 subunit gamma from Thalassiosira weissflogii (Marine diatom).